Reading from the N-terminus, the 342-residue chain is Phosphate acyltransferase (342 aa).

It belongs to the PlsX family. In terms of assembly, homodimer. Probably interacts with PlsY.

The protein resides in the cytoplasm. The enzyme catalyses a fatty acyl-[ACP] + phosphate = an acyl phosphate + holo-[ACP]. It functions in the pathway lipid metabolism; phospholipid metabolism. Catalyzes the reversible formation of acyl-phosphate (acyl-PO(4)) from acyl-[acyl-carrier-protein] (acyl-ACP). This enzyme utilizes acyl-ACP as fatty acyl donor, but not acyl-CoA. This Shewanella amazonensis (strain ATCC BAA-1098 / SB2B) protein is Phosphate acyltransferase.